A 359-amino-acid polypeptide reads, in one-letter code: Protein-glutamate methylesterase/protein-glutamine glutaminase 1 (359 aa).

Residues 4-121 form the Response regulatory domain; the sequence is SVLIVDDSAV…RAFLLEAAKE (118 aa). Position 55 is a 4-aspartylphosphate (D55). The 186-residue stretch at 169 to 354 folds into the CheB-type methylesterase domain; that stretch reads YRTTEKIIAI…MSLERIAHML (186 aa). Residues S181, H207, and D303 contribute to the active site.

The protein belongs to the CheB family. Phosphorylated by CheA. Phosphorylation of the N-terminal regulatory domain activates the methylesterase activity.

Its subcellular location is the cytoplasm. It catalyses the reaction [protein]-L-glutamate 5-O-methyl ester + H2O = L-glutamyl-[protein] + methanol + H(+). It carries out the reaction L-glutaminyl-[protein] + H2O = L-glutamyl-[protein] + NH4(+). In terms of biological role, involved in chemotaxis. Part of a chemotaxis signal transduction system that modulates chemotaxis in response to various stimuli. Catalyzes the demethylation of specific methylglutamate residues introduced into the chemoreceptors (methyl-accepting chemotaxis proteins or MCP) by CheR. Also mediates the irreversible deamidation of specific glutamine residues to glutamic acid. The chain is Protein-glutamate methylesterase/protein-glutamine glutaminase 1 from Chromobacterium violaceum (strain ATCC 12472 / DSM 30191 / JCM 1249 / CCUG 213 / NBRC 12614 / NCIMB 9131 / NCTC 9757 / MK).